The sequence spans 595 residues: O-phosphoseryl-tRNA(Sec) selenium transferase (595 aa).

Position 75 (Arg75) interacts with pyridoxal 5'-phosphate. Residues 96–106 are phosphate loop (P-loop); that stretch reads GRSGDLFSEQP. Substrate contacts are provided by Arg97, Ser98, and Gln105. Positions 174-187 are enriched in polar residues; it reads RTVTKDSTSATSAA. Disordered stretches follow at residues 174–208 and 257–278; these read RTVT…TSLP and STNR…TPTS. Residues 196-205 are compositionally biased toward basic and acidic residues; that stretch reads EADRDRHDRT. Position 358 (Arg358) interacts with tRNA. N6-(pyridoxal phosphate)lysine is present on Lys371. Position 400 (Arg400) interacts with substrate.

Belongs to the SepSecS family. In terms of assembly, homotetramer composed of two homodimers. Requires pyridoxal 5'-phosphate as cofactor.

It is found in the cytoplasm. It catalyses the reaction O-phospho-L-seryl-tRNA(Sec) + selenophosphate + H2O = L-selenocysteinyl-tRNA(Sec) + 2 phosphate. It functions in the pathway aminoacyl-tRNA biosynthesis; selenocysteinyl-tRNA(Sec) biosynthesis; selenocysteinyl-tRNA(Sec) from L-seryl-tRNA(Sec) (archaeal/eukaryal route): step 2/2. Functionally, converts O-phosphoseryl-tRNA(Sec) to selenocysteinyl-tRNA(Sec) required for selenoprotein biosynthesis. The chain is O-phosphoseryl-tRNA(Sec) selenium transferase from Leishmania donovani.